The sequence spans 108 residues: ATP-dependent Clp protease adapter protein ClpS (108 aa).

This sequence belongs to the ClpS family. As to quaternary structure, binds to the N-terminal domain of the chaperone ClpA.

Functionally, involved in the modulation of the specificity of the ClpAP-mediated ATP-dependent protein degradation. The chain is ATP-dependent Clp protease adapter protein ClpS from Leptospira borgpetersenii serovar Hardjo-bovis (strain JB197).